Reading from the N-terminus, the 119-residue chain is Large ribosomal subunit protein bL20 (119 aa).

It belongs to the bacterial ribosomal protein bL20 family.

Its function is as follows. Binds directly to 23S ribosomal RNA and is necessary for the in vitro assembly process of the 50S ribosomal subunit. It is not involved in the protein synthesizing functions of that subunit. The polypeptide is Large ribosomal subunit protein bL20 (Azorhizobium caulinodans (strain ATCC 43989 / DSM 5975 / JCM 20966 / LMG 6465 / NBRC 14845 / NCIMB 13405 / ORS 571)).